Consider the following 161-residue polypeptide: Large ribosomal subunit protein bL21m (161 aa).

The N-terminal 35 residues, 1–35 (MLQLKFIWPVARITPIYRPFTSHPFRNLATSSSIS), are a transit peptide targeting the mitochondrion.

It belongs to the bacterial ribosomal protein bL21 family. In terms of assembly, component of the mitochondrial large ribosomal subunit (mt-LSU). Mature yeast 74S mitochondrial ribosomes consist of a small (37S) and a large (54S) subunit. The 37S small subunit contains a 15S ribosomal RNA (15S mt-rRNA) and 34 different proteins. The 54S large subunit contains a 21S rRNA (21S mt-rRNA) and 46 different proteins.

Its subcellular location is the mitochondrion. Component of the mitochondrial ribosome (mitoribosome), a dedicated translation machinery responsible for the synthesis of mitochondrial genome-encoded proteins, including at least some of the essential transmembrane subunits of the mitochondrial respiratory chain. The mitoribosomes are attached to the mitochondrial inner membrane and translation products are cotranslationally integrated into the membrane. In Saccharomyces cerevisiae (strain ATCC 204508 / S288c) (Baker's yeast), this protein is Large ribosomal subunit protein bL21m (MRPL49).